Reading from the N-terminus, the 289-residue chain is Nucleotide-binding protein LAF_0356 (289 aa).

12–19 (GMSGAGKT) is a binding site for ATP. 62–65 (DSRS) lines the GTP pocket.

The protein belongs to the RapZ-like family.

Displays ATPase and GTPase activities. In Limosilactobacillus fermentum (strain NBRC 3956 / LMG 18251) (Lactobacillus fermentum), this protein is Nucleotide-binding protein LAF_0356.